The sequence spans 493 residues: Cysteine--tRNA ligase (493 aa).

Residue Cys41 participates in Zn(2+) binding. A 'HIGH' region motif is present at residues 43 to 53; it reads PTVYNYPHIGN. Residues Cys231, His256, and Glu260 each coordinate Zn(2+). The 'KMSKS' region signature appears at 296–300; the sequence is KMSKS. Lys299 lines the ATP pocket.

The protein belongs to the class-I aminoacyl-tRNA synthetase family. Monomer. The cofactor is Zn(2+).

It is found in the cytoplasm. The catalysed reaction is tRNA(Cys) + L-cysteine + ATP = L-cysteinyl-tRNA(Cys) + AMP + diphosphate. The protein is Cysteine--tRNA ligase of Novosphingobium aromaticivorans (strain ATCC 700278 / DSM 12444 / CCUG 56034 / CIP 105152 / NBRC 16084 / F199).